The sequence spans 218 residues: Riboflavin kinase (218 aa).

A signal peptide spans M1–L19. Mg(2+) is bound by residues T72 and N74. Residue E155 is the Nucleophile of the active site.

This sequence belongs to the flavokinase family. Zn(2+) serves as cofactor. It depends on Mg(2+) as a cofactor.

The protein localises to the microsome. The protein resides in the mitochondrion inner membrane. It localises to the endoplasmic reticulum. It carries out the reaction riboflavin + ATP = FMN + ADP + H(+). The protein operates within cofactor biosynthesis; FMN biosynthesis; FMN from riboflavin (ATP route): step 1/1. Its function is as follows. Catalyzes the phosphorylation of riboflavin (vitamin B2) to form flavin mononucleotide (FMN) coenzyme. The sequence is that of Riboflavin kinase (FMN1) from Saccharomyces cerevisiae (strain ATCC 204508 / S288c) (Baker's yeast).